Here is a 92-residue protein sequence, read N- to C-terminus: UPF0473 protein BCE33L4129 (92 aa).

This sequence belongs to the UPF0473 family.

This is UPF0473 protein BCE33L4129 from Bacillus cereus (strain ZK / E33L).